The sequence spans 158 residues: SsrA-binding protein (158 aa).

It belongs to the SmpB family.

The protein localises to the cytoplasm. Functionally, required for rescue of stalled ribosomes mediated by trans-translation. Binds to transfer-messenger RNA (tmRNA), required for stable association of tmRNA with ribosomes. tmRNA and SmpB together mimic tRNA shape, replacing the anticodon stem-loop with SmpB. tmRNA is encoded by the ssrA gene; the 2 termini fold to resemble tRNA(Ala) and it encodes a 'tag peptide', a short internal open reading frame. During trans-translation Ala-aminoacylated tmRNA acts like a tRNA, entering the A-site of stalled ribosomes, displacing the stalled mRNA. The ribosome then switches to translate the ORF on the tmRNA; the nascent peptide is terminated with the 'tag peptide' encoded by the tmRNA and targeted for degradation. The ribosome is freed to recommence translation, which seems to be the essential function of trans-translation. This is SsrA-binding protein from Hydrogenovibrio crunogenus (strain DSM 25203 / XCL-2) (Thiomicrospira crunogena).